A 131-amino-acid chain; its full sequence is Small ribosomal subunit protein uS8c (131 aa).

It belongs to the universal ribosomal protein uS8 family. As to quaternary structure, part of the 30S ribosomal subunit.

It is found in the plastid. The protein resides in the chloroplast. One of the primary rRNA binding proteins, it binds directly to 16S rRNA central domain where it helps coordinate assembly of the platform of the 30S subunit. This chain is Small ribosomal subunit protein uS8c (rps8), found in Tupiella akineta (Green alga).